The following is a 423-amino-acid chain: Glutamate-1-semialdehyde 2,1-aminomutase (423 aa).

Lys-259 carries the post-translational modification N6-(pyridoxal phosphate)lysine.

It belongs to the class-III pyridoxal-phosphate-dependent aminotransferase family. HemL subfamily. In terms of assembly, homodimer. Pyridoxal 5'-phosphate serves as cofactor.

Its subcellular location is the cytoplasm. The enzyme catalyses (S)-4-amino-5-oxopentanoate = 5-aminolevulinate. The protein operates within porphyrin-containing compound metabolism; protoporphyrin-IX biosynthesis; 5-aminolevulinate from L-glutamyl-tRNA(Glu): step 2/2. The chain is Glutamate-1-semialdehyde 2,1-aminomutase from Thermosipho melanesiensis (strain DSM 12029 / CIP 104789 / BI429).